We begin with the raw amino-acid sequence, 595 residues long: DNA ligase (595 aa).

Residues 32–36, 81–82, and Glu-113 contribute to the NAD(+) site; these read DEKYD and SL. The active-site N6-AMP-lysine intermediate is Lys-115. NAD(+) contacts are provided by Arg-136, Glu-178, Lys-296, and Lys-320. Zn(2+) is bound by residues Cys-414, Cys-417, Cys-432, and Cys-438.

Belongs to the NAD-dependent DNA ligase family. LigA subfamily. The cofactor is Mg(2+). Mn(2+) is required as a cofactor.

The enzyme catalyses NAD(+) + (deoxyribonucleotide)n-3'-hydroxyl + 5'-phospho-(deoxyribonucleotide)m = (deoxyribonucleotide)n+m + AMP + beta-nicotinamide D-nucleotide.. DNA ligase that catalyzes the formation of phosphodiester linkages between 5'-phosphoryl and 3'-hydroxyl groups in double-stranded DNA using NAD as a coenzyme and as the energy source for the reaction. It is essential for DNA replication and repair of damaged DNA. The sequence is that of DNA ligase from Blochmanniella pennsylvanica (strain BPEN).